We begin with the raw amino-acid sequence, 47 residues long: uncharacterized protein (47 aa).

The first 18 residues, 1–18 (MKKWLLIIAGALIISACA), serve as a signal peptide directing secretion. Residues 28–47 (EGSHSGVKFDKDSRQWGLNQ) are disordered.

This is an uncharacterized protein from Haemophilus influenzae (strain ATCC 51907 / DSM 11121 / KW20 / Rd).